A 185-amino-acid polypeptide reads, in one-letter code: Threonylcarbamoyl-AMP synthase (185 aa).

A YrdC-like domain is found at 4-185 (SWRVQQAARE…LATGKVVRPS (182 aa)).

Belongs to the SUA5 family. TsaC subfamily.

It is found in the cytoplasm. It carries out the reaction L-threonine + hydrogencarbonate + ATP = L-threonylcarbamoyladenylate + diphosphate + H2O. Required for the formation of a threonylcarbamoyl group on adenosine at position 37 (t(6)A37) in tRNAs that read codons beginning with adenine. Catalyzes the conversion of L-threonine, HCO(3)(-)/CO(2) and ATP to give threonylcarbamoyl-AMP (TC-AMP) as the acyladenylate intermediate, with the release of diphosphate. This is Threonylcarbamoyl-AMP synthase from Pseudomonas fluorescens (strain ATCC BAA-477 / NRRL B-23932 / Pf-5).